Reading from the N-terminus, the 911-residue chain is Anoctamin-6 (911 aa).

Residues 1-301 (MQMMTRKVLL…YGEKIGIYFA (301 aa)) are Cytoplasmic-facing. The chain crosses the membrane as a helical span at residues 302-322 (WLGYYTQMLLLAAVVGVACFL). Residues 323 to 376 (YGYLDQDNCTWSKEVCDPDIGGQILMCPQCDRLCPFWRLNITCESSKKLCIFDS) are Extracellular-facing. N330 carries N-linked (GlcNAc...) asparagine glycosylation. 5 cysteine pairs are disulfide-bonded: C331–C372, C338–C365, C349–C807, C352–C356, and C596–C601. Residue N362 is glycosylated (N-linked (GlcNAc...) asparagine). The chain crosses the membrane as a helical span at residues 377-397 (FGTLIFAVFMGVWVTLFLEFW). Over 398–456 (KRRQAELEYEWDTVELQQEEQARPEYEAQCNHVVINEITQEEERIPFTTCGKCIRVTLC) the chain is Cytoplasmic. The helical transmembrane segment at 457–477 (ASAVFFWILLIIASVIGIIVY) threads the bilayer. Topologically, residues 478–510 (RLSVFIVFSTTLPKNPNGTDPIQKYLTPQMATS) are extracellular. Residue N494 is glycosylated (N-linked (GlcNAc...) asparagine). Residues 511 to 531 (ITASIISFIIIMILNTIYEKV) form a helical membrane-spanning segment. Residues 532-552 (AIMITNFELPRTQTDYENSLT) lie on the Cytoplasmic side of the membrane. A helical membrane pass occupies residues 553 to 573 (MKMFLFQFVNYYSSCFYIAFF). At 574–602 (KGKFVGYPGDPVYLLGKYRSEECDPGGCL) the chain is on the extracellular side. The chain crosses the membrane as a helical span at residues 603 to 622 (LELTTQLTIIMGGKAIWNNI). At 623–664 (QEVLLPWVMNLIGRYKRVSGSEKITPRWEQDYHLQPMGKLGL) the chain is on the cytoplasmic side. 3 residues coordinate Ca(2+): E624, E667, and E670. A run of 2 helical transmembrane segments spans residues 665–685 (FYEY…VASF) and 686–706 (PLAP…DAWK). The Cytoplasmic segment spans residues 707 to 723 (LTTQFRRMVPEKAQDIG). A helical transmembrane segment spans residues 724-744 (AWQPIMQGIAILAVVTNAMII). Topologically, residues 745–837 (AFTSDMIPRL…YWHVIAAKLA (93 aa)) are extracellular. N778, N785, and N803 each carry an N-linked (GlcNAc...) asparagine glycan. The helical transmembrane segment at 838–858 (FIIVMEHIIYSVKFFISYAIP) threads the bilayer. Residues 859 to 911 (DVSKITKSKIKREKYLTQKLLHESHLKDLTKNMGIIAERIGGTVDNSVRPKLE) are Cytoplasmic-facing.

It belongs to the anoctamin family. Homodimer. Predominant expression seen in epithelial tissues. Also found in skeletal system where it is primarily expressed in osteoblasts.

The protein localises to the cell membrane. It carries out the reaction a 1,2-diacyl-sn-glycero-3-phospho-L-serine(in) = a 1,2-diacyl-sn-glycero-3-phospho-L-serine(out). The catalysed reaction is a beta-D-galactosyl-(1&lt;-&gt;1')-N-acylsphing-4-enine(out) = a beta-D-galactosyl-(1&lt;-&gt;1')-N-acylsphing-4-enine(in). The enzyme catalyses a 1,2-diacyl-sn-glycero-3-phosphocholine(in) = a 1,2-diacyl-sn-glycero-3-phosphocholine(out). Its activity is regulated as follows. Exhibits synergistic gating by Ca(2+) and voltage. Inhibited by some non-specific cation channel blockers such as: ruthenium red, 2-aminoethyl diphenylborinate (2APB), gadolinium and cadmium ions. In terms of biological role, small-conductance calcium-activated nonselective cation (SCAN) channel which acts as a regulator of phospholipid scrambling in platelets, osteoblasts and fetal thymocytes. Phospholipid scrambling results in surface exposure of phosphatidylserine which in platelets is essential to trigger the clotting system whereas in osteoblasts is essential for the deposition of hydroxyapatite during bone mineralization. Has calcium-dependent phospholipid scramblase activity; scrambles phosphatidylserine, phosphatidylcholine and galactosylceramide. Can generate outwardly rectifying chloride channel currents in airway epithelial cells and Jurkat T lymphocytes. The sequence is that of Anoctamin-6 (Ano6) from Mus musculus (Mouse).